Reading from the N-terminus, the 599-residue chain is Translation initiation factor IF-2 (599 aa).

Residues 111-278 (PRPPIITVMG…SILLLAEILE (168 aa)) form the tr-type G domain. The interval 120 to 127 (GHVDHGKT) is G1. Residue 120 to 127 (GHVDHGKT) participates in GTP binding. A G2 region spans residues 145-149 (GITQH). A G3 region spans residues 166 to 169 (DTPG). Residues 166-170 (DTPGH) and 220-223 (NKMD) each bind GTP. The G4 stretch occupies residues 220–223 (NKMD). The G5 stretch occupies residues 256–258 (SAL).

It belongs to the TRAFAC class translation factor GTPase superfamily. Classic translation factor GTPase family. IF-2 subfamily.

Its subcellular location is the cytoplasm. Functionally, one of the essential components for the initiation of protein synthesis. Protects formylmethionyl-tRNA from spontaneous hydrolysis and promotes its binding to the 30S ribosomal subunits. Also involved in the hydrolysis of GTP during the formation of the 70S ribosomal complex. The polypeptide is Translation initiation factor IF-2 (Mesomycoplasma hyopneumoniae (strain 7448) (Mycoplasma hyopneumoniae)).